The primary structure comprises 226 residues: Late protein I226R (226 aa).

A signal peptide spans 1–16 (MKMETFLVCLFHNADG). N-linked (GlcNAc...) asparagine; by host glycosylation is found at asparagine 142 and asparagine 164.

The protein belongs to the asfivirus I226R family.

Its function is as follows. Plays a role in the inhibition of host NF-kappa-B and IRF3 signaling pathways. Mechanistically, promotes the degradation of host IKBKG through enhancing its ubiquitination leading to inhibition of both pathways. In Ornithodoros (relapsing fever ticks), this protein is Late protein I226R.